Here is a 208-residue protein sequence, read N- to C-terminus: Small ribosomal subunit protein uS4 (208 aa).

Residues 98–159 (RRLDNVAYRL…KSRKVAAISE (62 aa)) form the S4 RNA-binding domain.

This sequence belongs to the universal ribosomal protein uS4 family. As to quaternary structure, part of the 30S ribosomal subunit. Contacts protein S5. The interaction surface between S4 and S5 is involved in control of translational fidelity.

Its function is as follows. One of the primary rRNA binding proteins, it binds directly to 16S rRNA where it nucleates assembly of the body of the 30S subunit. In terms of biological role, with S5 and S12 plays an important role in translational accuracy. The chain is Small ribosomal subunit protein uS4 from Citrifermentans bemidjiense (strain ATCC BAA-1014 / DSM 16622 / JCM 12645 / Bem) (Geobacter bemidjiensis).